A 268-amino-acid chain; its full sequence is NAD kinase (268 aa).

The active-site Proton acceptor is D45. NAD(+) contacts are provided by residues 45 to 46, 122 to 123, R148, D150, 161 to 166, A185, and Q223; these read DG, NE, and TAYGKS.

The protein belongs to the NAD kinase family. A divalent metal cation serves as cofactor.

It localises to the cytoplasm. It carries out the reaction NAD(+) + ATP = ADP + NADP(+) + H(+). Its function is as follows. Involved in the regulation of the intracellular balance of NAD and NADP, and is a key enzyme in the biosynthesis of NADP. Catalyzes specifically the phosphorylation on 2'-hydroxyl of the adenosine moiety of NAD to yield NADP. The sequence is that of NAD kinase from Latilactobacillus sakei subsp. sakei (strain 23K) (Lactobacillus sakei subsp. sakei).